The chain runs to 122 residues: MIQQETYLNVADNSGAKKLLCIRVLGGSNRRYGSVGDVIIATVKDATPNMAVKKSDVVRAVIVRTRKSIRRESGMSIRFDDNAAVLINQDGNPRGTRVFGPVARELRDKNFTKIVSLAPEVL.

The protein belongs to the universal ribosomal protein uL14 family. In terms of assembly, part of the 50S ribosomal subunit. Forms a cluster with proteins L3 and L19. In the 70S ribosome, L14 and L19 interact and together make contacts with the 16S rRNA in bridges B5 and B8.

In terms of biological role, binds to 23S rRNA. Forms part of two intersubunit bridges in the 70S ribosome. The chain is Large ribosomal subunit protein uL14 from Thermosynechococcus vestitus (strain NIES-2133 / IAM M-273 / BP-1).